Consider the following 709-residue polypeptide: Kelch-like protein 11 (709 aa).

A signal peptide spans 1–15 (MAAAVAAAAAAAAAA). The 77-residue stretch at 95-171 (CDITLCFGGA…MYTGRIRVST (77 aa)) folds into the BTB domain. In terms of domain architecture, BACK spans 206 to 308 (CVAIHSLAHM…KPTYLTRHVK (103 aa)). 5 Kelch repeats span residues 361-408 (VIMV…ITES), 409-454 (YVYV…EVKG), 456-502 (LYSI…AIED), 504-557 (FVYI…VVNS), and 611-662 (DVFI…HVRI). Ser-466 bears the Phosphoserine mark.

In terms of assembly, homodimer. Interacts with CUL3. Component of a cullin-RING-based BCR (BTB-CUL3-RBX1) E3 ubiquitin-protein ligase complex.

In terms of biological role, component of a cullin-RING-based BCR (BTB-CUL3-RBX1) E3 ubiquitin-protein ligase complex that mediates the ubiquitination of target proteins, leading most often to their proteasomal degradation. This Mus musculus (Mouse) protein is Kelch-like protein 11 (Klhl11).